The following is a 195-amino-acid chain: Nucleoside triphosphate pyrophosphatase (195 aa).

Aspartate 70 (proton acceptor) is an active-site residue.

The protein belongs to the Maf family. A divalent metal cation serves as cofactor.

The protein resides in the cytoplasm. The enzyme catalyses a ribonucleoside 5'-triphosphate + H2O = a ribonucleoside 5'-phosphate + diphosphate + H(+). It catalyses the reaction a 2'-deoxyribonucleoside 5'-triphosphate + H2O = a 2'-deoxyribonucleoside 5'-phosphate + diphosphate + H(+). Functionally, nucleoside triphosphate pyrophosphatase. May have a dual role in cell division arrest and in preventing the incorporation of modified nucleotides into cellular nucleic acids. The chain is Nucleoside triphosphate pyrophosphatase from Microcystis aeruginosa (strain NIES-843 / IAM M-2473).